The chain runs to 89 residues: UPF0147 protein YN1551_1489 (89 aa).

Belongs to the UPF0147 family.

The sequence is that of UPF0147 protein YN1551_1489 from Saccharolobus islandicus (strain Y.N.15.51 / Yellowstone #2) (Sulfolobus islandicus).